Consider the following 224-residue polypeptide: Putative O-methyltransferase MUL_4520 (224 aa).

The segment covering 1–11 (MHGTDSSSDTP) has biased composition (polar residues). The interval 1–20 (MHGTDSSSDTPGQPAPSRAE) is disordered. S-adenosyl-L-methionine is bound by residues Val-51, Glu-73, 75–76 (GT), Ser-81, Asp-99, and Ile-100. Asp-147 contributes to the substrate binding site. Asp-149 is an S-adenosyl-L-methionine binding site.

This sequence belongs to the class I-like SAM-binding methyltransferase superfamily. Cation-dependent O-methyltransferase family.

The polypeptide is Putative O-methyltransferase MUL_4520 (Mycobacterium ulcerans (strain Agy99)).